The chain runs to 295 residues: Ribosomal RNA small subunit methyltransferase H (295 aa).

S-adenosyl-L-methionine is bound by residues 35–37 (GGH), E55, F82, D103, and Q110.

The protein belongs to the methyltransferase superfamily. RsmH family.

It is found in the cytoplasm. It catalyses the reaction cytidine(1402) in 16S rRNA + S-adenosyl-L-methionine = N(4)-methylcytidine(1402) in 16S rRNA + S-adenosyl-L-homocysteine + H(+). Its function is as follows. Specifically methylates the N4 position of cytidine in position 1402 (C1402) of 16S rRNA. This Desulfotalea psychrophila (strain LSv54 / DSM 12343) protein is Ribosomal RNA small subunit methyltransferase H.